A 490-amino-acid chain; its full sequence is Betaine aldehyde dehydrogenase (490 aa).

K(+)-binding residues include Thr26, Ile27, and Asp93. Residue 150 to 152 (GAW) coordinates NAD(+). Lys162 serves as the catalytic Charge relay system. 176-179 (KPSE) is a binding site for NAD(+). Val180 provides a ligand contact to K(+). 230-233 (GVAS) contributes to the NAD(+) binding site. Leu246 serves as a coordination point for K(+). The active-site Proton acceptor is Glu252. Residues Gly254, Cys286, and Glu387 each coordinate NAD(+). Cys286 functions as the Nucleophile in the catalytic mechanism. Cys286 bears the Cysteine sulfenic acid (-SOH) mark. 2 residues coordinate K(+): Lys457 and Gly460. The active-site Charge relay system is the Glu464.

This sequence belongs to the aldehyde dehydrogenase family. As to quaternary structure, dimer of dimers. Requires K(+) as cofactor.

It catalyses the reaction betaine aldehyde + NAD(+) + H2O = glycine betaine + NADH + 2 H(+). It participates in amine and polyamine biosynthesis; betaine biosynthesis via choline pathway; betaine from betaine aldehyde: step 1/1. Its function is as follows. Involved in the biosynthesis of the osmoprotectant glycine betaine. Catalyzes the irreversible oxidation of betaine aldehyde to the corresponding acid. The chain is Betaine aldehyde dehydrogenase from Escherichia coli O6:K15:H31 (strain 536 / UPEC).